Here is a 95-residue protein sequence, read N- to C-terminus: Small ubiquitin-related modifier 4 (95 aa).

One can recognise a Ubiquitin-like domain in the interval 17 to 95; sequence HINLKVAGQD…VFQQPTGGVY (79 aa). Residue Gly93 forms a Glycyl lysine isopeptide (Gly-Lys) (interchain with K-? in acceptor proteins) linkage. A propeptide spanning residues 94 to 95 is cleaved from the precursor; that stretch reads VY.

It belongs to the ubiquitin family. SUMO subfamily. As to quaternary structure, interacts with SAE2. Covalently attached to a number of proteins. In terms of processing, in contrast to SUMO1, SUMO2 and SUMO3, seems to be insensitive to sentrin-specific proteases due to the presence of Pro-90. This may impair processing to mature form and conjugation to substrates. In terms of tissue distribution, expressed mainly in adult and embryonic kidney. Expressed at various levels in immune tissues, with the highest expression in the lymph node and spleen.

Functionally, ubiquitin-like protein which can be covalently attached to target lysines as a monomer. Does not seem to be involved in protein degradation and may modulate protein subcellular localization, stability or activity. Upon oxidative stress, conjugates to various anti-oxidant enzymes, chaperones, and stress defense proteins. May also conjugate to NFKBIA, TFAP2A and FOS, negatively regulating their transcriptional activity, and to NR3C1, positively regulating its transcriptional activity. Covalent attachment to its substrates requires prior activation by the E1 complex SAE1-SAE2 and linkage to the E2 enzyme UBE2I. This chain is Small ubiquitin-related modifier 4 (SUMO4), found in Homo sapiens (Human).